Reading from the N-terminus, the 879-residue chain is DNA mismatch repair protein MutS (879 aa).

ATP is bound at residue 629–636; sequence GPNMAGKS. The segment at 824–845 is disordered; sequence VGGQPQKELSEHKPHQPSLFAP.

It belongs to the DNA mismatch repair MutS family.

This protein is involved in the repair of mismatches in DNA. It is possible that it carries out the mismatch recognition step. This protein has a weak ATPase activity. The chain is DNA mismatch repair protein MutS from Desulfotalea psychrophila (strain LSv54 / DSM 12343).